Reading from the N-terminus, the 372-residue chain is GDSL esterase/lipase At5g45910 (372 aa).

The signal sequence occupies residues M1 to S19. Residue S37 is the Nucleophile of the active site. 3 N-linked (GlcNAc...) asparagine glycosylation sites follow: N66, N101, and N137. Residues D345 and H348 contribute to the active site.

The protein belongs to the 'GDSL' lipolytic enzyme family.

It is found in the secreted. The polypeptide is GDSL esterase/lipase At5g45910 (Arabidopsis thaliana (Mouse-ear cress)).